Here is a 169-residue protein sequence, read N- to C-terminus: Cytochrome c oxidase subunit 4 isoform 1, mitochondrial (169 aa).

The transit peptide at 1 to 22 directs the protein to the mitochondrion; the sequence is MLATRALSLIGKRAISTSVCLR. Residues 23 to 98 are Mitochondrial matrix-facing; that stretch reads AHGSVVKSED…SFAEMNKGTN (76 aa). Lys-29 carries the N6-acetyllysine; alternate modification. Lys-29 is subject to N6-succinyllysine; alternate. At Lys-53 the chain carries N6-acetyllysine. Phosphoserine occurs at positions 56 and 58. Lys-60 is subject to N6-acetyllysine; alternate. Lys-60 is subject to N6-succinyllysine; alternate. Lys-67 bears the N6-acetyllysine mark. Residues 99–124 form a helical membrane-spanning segment; that stretch reads EWKTVVGLAMFFIGFTALVLIWEKSY. Residues 125 to 169 are Mitochondrial intermembrane-facing; the sequence is VYGPIPHTFDRDWVAMQTKRMLDMKVNPIQGFSAKWDYNKNEWKK.

The protein belongs to the cytochrome c oxidase IV family. In terms of assembly, component of the cytochrome c oxidase (complex IV, CIV), a multisubunit enzyme composed of 14 subunits. The complex is composed of a catalytic core of 3 subunits MT-CO1, MT-CO2 and MT-CO3, encoded in the mitochondrial DNA, and 11 supernumerary subunits COX4I, COX5A, COX5B, COX6A, COX6B, COX6C, COX7A, COX7B, COX7C, COX8 and NDUFA4, which are encoded in the nuclear genome. The complex exists as a monomer or a dimer and forms supercomplexes (SCs) in the inner mitochondrial membrane with NADH-ubiquinone oxidoreductase (complex I, CI) and ubiquinol-cytochrome c oxidoreductase (cytochrome b-c1 complex, complex III, CIII), resulting in different assemblies (supercomplex SCI(1)III(2)IV(1) and megacomplex MCI(2)III(2)IV(2)). Interacts with PHB2; the interaction decreases in absence of SPHK2. Interacts with AFG1L. Interacts with ABCB7; this interaction allows the regulation of cellular iron homeostasis and cellular reactive oxygen species (ROS) levels in cardiomyocytes. Interacts with FLVCR2; this interaction occurs in the absence of heme and is disrupted upon heme binding. Interacts with IRGC.

The protein localises to the mitochondrion inner membrane. The protein operates within energy metabolism; oxidative phosphorylation. Its function is as follows. Component of the cytochrome c oxidase, the last enzyme in the mitochondrial electron transport chain which drives oxidative phosphorylation. The respiratory chain contains 3 multisubunit complexes succinate dehydrogenase (complex II, CII), ubiquinol-cytochrome c oxidoreductase (cytochrome b-c1 complex, complex III, CIII) and cytochrome c oxidase (complex IV, CIV), that cooperate to transfer electrons derived from NADH and succinate to molecular oxygen, creating an electrochemical gradient over the inner membrane that drives transmembrane transport and the ATP synthase. Cytochrome c oxidase is the component of the respiratory chain that catalyzes the reduction of oxygen to water. Electrons originating from reduced cytochrome c in the intermembrane space (IMS) are transferred via the dinuclear copper A center (CU(A)) of subunit 2 and heme A of subunit 1 to the active site in subunit 1, a binuclear center (BNC) formed by heme A3 and copper B (CU(B)). The BNC reduces molecular oxygen to 2 water molecules using 4 electrons from cytochrome c in the IMS and 4 protons from the mitochondrial matrix. This chain is Cytochrome c oxidase subunit 4 isoform 1, mitochondrial (Cox4i1), found in Rattus norvegicus (Rat).